The sequence spans 177 residues: ATP synthase subunit delta (177 aa).

The protein belongs to the ATPase delta chain family. F-type ATPases have 2 components, F(1) - the catalytic core - and F(0) - the membrane proton channel. F(1) has five subunits: alpha(3), beta(3), gamma(1), delta(1), epsilon(1). F(0) has three main subunits: a(1), b(2) and c(10-14). The alpha and beta chains form an alternating ring which encloses part of the gamma chain. F(1) is attached to F(0) by a central stalk formed by the gamma and epsilon chains, while a peripheral stalk is formed by the delta and b chains.

It localises to the cell inner membrane. In terms of biological role, f(1)F(0) ATP synthase produces ATP from ADP in the presence of a proton or sodium gradient. F-type ATPases consist of two structural domains, F(1) containing the extramembraneous catalytic core and F(0) containing the membrane proton channel, linked together by a central stalk and a peripheral stalk. During catalysis, ATP synthesis in the catalytic domain of F(1) is coupled via a rotary mechanism of the central stalk subunits to proton translocation. Functionally, this protein is part of the stalk that links CF(0) to CF(1). It either transmits conformational changes from CF(0) to CF(1) or is implicated in proton conduction. This Edwardsiella ictaluri (strain 93-146) protein is ATP synthase subunit delta.